The primary structure comprises 309 residues: HTH-type transcriptional activator AaeR (309 aa).

The HTH lysR-type domain maps to 1-59; that stretch reads MERLKRMSVFAKVVEFGSFTAAARQLQMSVSSISQTVSKLEDELQVKLLNRSTRSIGLT. A DNA-binding region (H-T-H motif) is located at residues 19–38; sequence FTAAARQLQMSVSSISQTVS.

The protein belongs to the LysR transcriptional regulatory family.

With respect to regulation, activity is regulated by p-hydroxybenzoic acid. Functionally, transcriptional regulator that activates expression of the aaeXAB operon, which is involved in the efflux of aromatic carboxylic acids such as p-hydroxybenzoic acid (pHBA). In the presence of the effector pHBA, acts by binding to a single target within the aaeXAB-aaeR intergenic region. In the absence of pHBA, binds more than 50 sites along the E.coli K12 genome, including genes related to biofilm formation and several genes involved in stress response, suggesting that it might play a role in quorum sensing in the absence of pHBA. This is HTH-type transcriptional activator AaeR from Escherichia coli (strain K12).